Here is a 447-residue protein sequence, read N- to C-terminus: Ribosomal protein uS12 methylthiotransferase RimO (447 aa).

The MTTase N-terminal domain maps to 4 to 114; the sequence is PKVGFVSLGC…VMEAVHEYVP (111 aa). [4Fe-4S] cluster-binding residues include Cys-13, Cys-49, Cys-78, Cys-147, Cys-151, and Cys-154. One can recognise a Radical SAM core domain in the interval 133–370; it reads LTPKHYAYLK…MQVQQQISAA (238 aa). The TRAM domain maps to 373–443; the sequence is QKRIGQTMTV…EYDLFAKLIK (71 aa).

The protein belongs to the methylthiotransferase family. RimO subfamily. The cofactor is [4Fe-4S] cluster.

Its subcellular location is the cytoplasm. It carries out the reaction L-aspartate(89)-[ribosomal protein uS12]-hydrogen + (sulfur carrier)-SH + AH2 + 2 S-adenosyl-L-methionine = 3-methylsulfanyl-L-aspartate(89)-[ribosomal protein uS12]-hydrogen + (sulfur carrier)-H + 5'-deoxyadenosine + L-methionine + A + S-adenosyl-L-homocysteine + 2 H(+). Catalyzes the methylthiolation of an aspartic acid residue of ribosomal protein uS12. In Acinetobacter baumannii (strain SDF), this protein is Ribosomal protein uS12 methylthiotransferase RimO.